A 361-amino-acid polypeptide reads, in one-letter code: Phospho-N-acetylmuramoyl-pentapeptide-transferase (361 aa).

The next 10 helical transmembrane spans lie at 21-41, 72-92, 94-114, 135-155, 169-189, 200-220, 240-260, 263-283, 289-309, and 338-358; these read YITFRTGGAMVTALLISFVIG, TPTMGGLMILIAVIVSTLLWV, LANVYTWIVLLVTVGFGLIGF, LAWTIAIAGVAATWYIAVTPH, LLVNLGWFFIPFAILVMVGAS, GLAIVPIMIAAATFGLIAYLS, LAVFCGALVGAGLGFLWFNAP, MVFMGDTGSLSMGGALGAVSV, LVLAIVGGLFVLEAVSVMVQV, and TVVIRFWIIAAILALVGLSTL.

Belongs to the glycosyltransferase 4 family. MraY subfamily. It depends on Mg(2+) as a cofactor.

It is found in the cell inner membrane. The catalysed reaction is UDP-N-acetyl-alpha-D-muramoyl-L-alanyl-gamma-D-glutamyl-meso-2,6-diaminopimeloyl-D-alanyl-D-alanine + di-trans,octa-cis-undecaprenyl phosphate = di-trans,octa-cis-undecaprenyl diphospho-N-acetyl-alpha-D-muramoyl-L-alanyl-D-glutamyl-meso-2,6-diaminopimeloyl-D-alanyl-D-alanine + UMP. It functions in the pathway cell wall biogenesis; peptidoglycan biosynthesis. Its function is as follows. Catalyzes the initial step of the lipid cycle reactions in the biosynthesis of the cell wall peptidoglycan: transfers peptidoglycan precursor phospho-MurNAc-pentapeptide from UDP-MurNAc-pentapeptide onto the lipid carrier undecaprenyl phosphate, yielding undecaprenyl-pyrophosphoryl-MurNAc-pentapeptide, known as lipid I. The polypeptide is Phospho-N-acetylmuramoyl-pentapeptide-transferase (Rhodospirillum centenum (strain ATCC 51521 / SW)).